A 115-amino-acid polypeptide reads, in one-letter code: NADH-ubiquinone oxidoreductase chain 3 (115 aa).

Helical transmembrane passes span isoleucine 3–tryptophan 23, phenylalanine 55–leucine 75, and threonine 86–tryptophan 106.

The protein belongs to the complex I subunit 3 family. In terms of assembly, core subunit of respiratory chain NADH dehydrogenase (Complex I) which is composed of 45 different subunits. Interacts with TMEM186. Interacts with TMEM242.

It localises to the mitochondrion inner membrane. The catalysed reaction is a ubiquinone + NADH + 5 H(+)(in) = a ubiquinol + NAD(+) + 4 H(+)(out). In terms of biological role, core subunit of the mitochondrial membrane respiratory chain NADH dehydrogenase (Complex I) which catalyzes electron transfer from NADH through the respiratory chain, using ubiquinone as an electron acceptor. Essential for the catalytic activity of complex I. The protein is NADH-ubiquinone oxidoreductase chain 3 of Sus scrofa (Pig).